The sequence spans 314 residues: Trimethylamine N-oxide-binding protein (314 aa).

The signal sequence occupies residues 1–24 (MKKIVSLMSALVISVVSFAGISNA). Positions 38, 85, 114, 164, and 212 each coordinate trimethylamine N-oxide.

In terms of assembly, the complex is probably composed of two ATP-binding proteins (TmoW), two transmembrane proteins (TmoV) and a solute-binding protein (TmoX).

The protein localises to the periplasm. Part of the ABC transporter complex TmoXWV involved in trimethylamine N-oxide (TMAO) import. Possesses a high binding affinity toward TMAO, but presents little binding affinity toward betaine, carnitine, trimethylamine (TMA) or dimethylamine (DMA). This Pelagibacter ubique (strain HTCC1062) protein is Trimethylamine N-oxide-binding protein.